The primary structure comprises 272 residues: Shikimate dehydrogenase (NADP(+)) (272 aa).

Shikimate is bound by residues 14 to 16 and Thr61; that span reads SKS. Lys65 acts as the Proton acceptor in catalysis. Glu77 contacts NADP(+). Residues Asn86 and Asp102 each coordinate shikimate. Residues 126–130, 150–155, and Met213 each bind NADP(+); these read GAGGA and NRTFSK. Tyr215 contacts shikimate. Gly237 provides a ligand contact to NADP(+).

The protein belongs to the shikimate dehydrogenase family. As to quaternary structure, homodimer.

The catalysed reaction is shikimate + NADP(+) = 3-dehydroshikimate + NADPH + H(+). The protein operates within metabolic intermediate biosynthesis; chorismate biosynthesis; chorismate from D-erythrose 4-phosphate and phosphoenolpyruvate: step 4/7. Involved in the biosynthesis of the chorismate, which leads to the biosynthesis of aromatic amino acids. Catalyzes the reversible NADPH linked reduction of 3-dehydroshikimate (DHSA) to yield shikimate (SA). The protein is Shikimate dehydrogenase (NADP(+)) of Psychromonas ingrahamii (strain DSM 17664 / CCUG 51855 / 37).